A 144-amino-acid polypeptide reads, in one-letter code: Major allergen Blo t 12 (144 aa).

An N-terminal signal peptide occupies residues 1-20 (MKSVLIFLVAIALFSANIVS). A disordered region spans residues 24–77 (QTTRGRHTEPDDHHEKPTTQCTHEETTSTQHHHEEVVTTQTPHHEEKTTTEETH). In terms of domain architecture, Chitin-binding type-2 spans 92 to 144 (HVVCHEEGPIHIQEMCNKYIICSKSGSLWYITVMPCSIGTKFDPISRNCVLDN). Cys-127 and Cys-140 form a disulfide bridge.

The protein is Major allergen Blo t 12 of Blomia tropicalis (Mite).